Reading from the N-terminus, the 319-residue chain is BTB/POZ domain-containing adapter for CUL3-mediated RhoA degradation protein 2 (319 aa).

The region spanning 31–99 (KYIRLNVGGC…LRDDTIALPK (69 aa)) is the BTB domain.

The protein belongs to the BACURD family. As to quaternary structure, component of the BCR(TNFAIP1) E3 ubiquitin ligase complex, at least composed of cul3, tnfaip1/bacurd2 and rbx1.

Its subcellular location is the cytoplasm. It is found in the nucleus. It localises to the endosome. The protein operates within protein modification; protein ubiquitination. Its function is as follows. Substrate-specific adapter of a BCR (BTB-CUL3-RBX1) E3 ubiquitin-protein ligase complex involved in regulation of cytoskeleton structure. The BCR(TNFAIP1) E3 ubiquitin ligase complex mediates the ubiquitination of target proteins, leading to their degradation by the proteasome. In Xenopus laevis (African clawed frog), this protein is BTB/POZ domain-containing adapter for CUL3-mediated RhoA degradation protein 2 (tnfaip1).